Consider the following 347-residue polypeptide: MRIEEDLKLGFKDVLIRPKRSTLKSRSDVELERQFTFKHSDQSWSGVPIIAANMDTVGTFSMASALASFDILTAVHKHYSVEEWQAFINNSSADVLKHVMVSTGTSDADFEKTKQILDLNPALNFVCIDVANGYSEHFVQFVAKAREAWPTKTICAGNVVTGEMCEELILSGADIVKVGIGPGSVCTTRVKTGVGYPQLSAVIECADAAHGLGGMIVSDGGCTTPGDVAKAFGGGADFVMLGGMLAGHEESGGRIVEENGEKFMLFYGMSSESAMKRHVGGVAEYRAAEGKTVKLPLRGPVENTARDILGGLRSACTYVGASRLKELTKRTTFIRVQEQENRIFNNL.

108 to 131 (ADFEKTKQILDLNPALNFVCIDVA) is an NADP(+) binding site. Positions 181 and 183 each coordinate K(+). Cys-186 serves as the catalytic Thioimidate intermediate. 216–239 (IVSDGGCTTPGDVAKAFGGGADFV) is an NADP(+) binding site.

The protein belongs to the IMPDH/GMPR family. GuaC type 1 subfamily. Homotetramer.

It carries out the reaction IMP + NH4(+) + NADP(+) = GMP + NADPH + 2 H(+). Functionally, catalyzes the irreversible NADPH-dependent deamination of GMP to IMP. It functions in the conversion of nucleobase, nucleoside and nucleotide derivatives of G to A nucleotides, and in maintaining the intracellular balance of A and G nucleotides. This is GMP reductase from Shigella boydii serotype 4 (strain Sb227).